The chain runs to 263 residues: Benzil reductase ((S)-benzoin forming) IRC24 (263 aa).

Residues isoleucine 7 and asparagine 86 each coordinate NADP(+). Serine 143 acts as the Proton donor in catalysis. NADP(+)-binding residues include tyrosine 157, lysine 161, valine 190, and threonine 192. Catalysis depends on tyrosine 157, which acts as the Proton acceptor. Lysine 161 acts as the Lowers pKa of active site Tyr in catalysis.

The protein belongs to the short-chain dehydrogenases/reductases (SDR) family.

The catalysed reaction is (S)-benzoin + NADP(+) = benzil + NADPH + H(+). It catalyses the reaction 2-hydroxy-1-phenyl-1-propanone + NADP(+) = 1-phenyl-1,2-propanedione + NADPH + H(+). Its function is as follows. Reduces benzil stereospecifically to (S)-benzoin. Also reduces 1-phenyl-1,2-propanedione to 2-hydroxy-1-phenyl-1-propanone. Is probably involved in a pathway contributing to genomic integrity. This is Benzil reductase ((S)-benzoin forming) IRC24 (IRC24) from Saccharomyces cerevisiae (strain ATCC 204508 / S288c) (Baker's yeast).